The following is a 205-amino-acid chain: Probable ADP-ribosylation factor At2g15310 (205 aa).

Gly2 carries the N-myristoyl glycine lipid modification. GTP contacts are provided by residues 24 to 31 (GLDGSGKT), 67 to 71 (DIGGQ), and 126 to 129 (NKQD).

Belongs to the small GTPase superfamily. Arf family.

The protein localises to the golgi apparatus. GTP-binding protein involved in protein trafficking; may modulate vesicle budding and uncoating within the Golgi apparatus. This is Probable ADP-ribosylation factor At2g15310 from Arabidopsis thaliana (Mouse-ear cress).